The chain runs to 326 residues: Glycerol-3-phosphate dehydrogenase [NAD(P)+] (326 aa).

NADPH-binding residues include tryptophan 15, arginine 35, and lysine 107. Residues lysine 107, glycine 135, and serine 137 each contribute to the sn-glycerol 3-phosphate site. Residue alanine 139 coordinates NADPH. Sn-glycerol 3-phosphate-binding residues include lysine 190, aspartate 243, serine 253, arginine 254, and asparagine 255. Lysine 190 (proton acceptor) is an active-site residue. NADPH is bound at residue arginine 254. The NADPH site is built by leucine 273 and glutamate 275.

Belongs to the NAD-dependent glycerol-3-phosphate dehydrogenase family.

The protein localises to the cytoplasm. It catalyses the reaction sn-glycerol 3-phosphate + NAD(+) = dihydroxyacetone phosphate + NADH + H(+). The catalysed reaction is sn-glycerol 3-phosphate + NADP(+) = dihydroxyacetone phosphate + NADPH + H(+). It participates in membrane lipid metabolism; glycerophospholipid metabolism. Its function is as follows. Catalyzes the reduction of the glycolytic intermediate dihydroxyacetone phosphate (DHAP) to sn-glycerol 3-phosphate (G3P), the key precursor for phospholipid synthesis. The polypeptide is Glycerol-3-phosphate dehydrogenase [NAD(P)+] (Bradyrhizobium sp. (strain BTAi1 / ATCC BAA-1182)).